The chain runs to 185 residues: Alcohol dehydrogenase 1 (185 aa).

Residues 10–15 (GLGGVG), Asp34, Lys39, 103–105 (VGV), and Arg180 each bind NAD(+).

It belongs to the zinc-containing alcohol dehydrogenase family. Class-I subfamily. In terms of assembly, homodimer. Requires Zn(2+) as cofactor.

Its subcellular location is the cytoplasm. The enzyme catalyses a primary alcohol + NAD(+) = an aldehyde + NADH + H(+). It carries out the reaction a secondary alcohol + NAD(+) = a ketone + NADH + H(+). In Anas platyrhynchos (Mallard), this protein is Alcohol dehydrogenase 1 (ADH1).